The following is a 391-amino-acid chain: Ferrochelatase (391 aa).

Fe cation is bound by residues His-196 and Glu-281.

This sequence belongs to the ferrochelatase family.

The protein resides in the cytoplasm. The catalysed reaction is heme b + 2 H(+) = protoporphyrin IX + Fe(2+). Its pathway is porphyrin-containing compound metabolism; protoheme biosynthesis; protoheme from protoporphyrin-IX: step 1/1. Functionally, catalyzes the ferrous insertion into protoporphyrin IX. In Prochlorococcus marinus (strain MIT 9312), this protein is Ferrochelatase.